Consider the following 376-residue polypeptide: MEERTLVILGATGSIGTQTLDVLKKVKGIRLIGISFHSNLELAFKIVKEFNVKNVAITGDVEFEDSSINVWKGSHSIEEMLEALKPDITMVAVSGFSGLRAVLASLEHSKRVCLANKESLVCGGFLVKKKLKEKGTELIPVDSEHSAIFQVMEPEVEKVVLTASGGALRDWKISKIDRARPEDVLKHPVWNMGARITVDSATMVNKAFEVLEAMELFELPFEKIEVKIHREGLVHGAVVLPDGNVKMVVSPPDMRIPISYALFYPRRVALEPFFLRTISLSFEDPDPEKYPAFFLLKEIKDSYALRTAFNAADEVAVEAFLKGRIRFGGIHRVIEKTLEEFQGYPQPRTLDDVERIHFEAIKKAERVTEWLSSTSY.

6 residues coordinate NADPH: Thr12, Gly13, Ser14, Ile15, Asn39, and Asn116. Lys117 lines the 1-deoxy-D-xylulose 5-phosphate pocket. Glu118 is a binding site for NADPH. Asp142 provides a ligand contact to Mn(2+). Positions 143, 144, 164, and 187 each coordinate 1-deoxy-D-xylulose 5-phosphate. Glu144 provides a ligand contact to Mn(2+). Gly193 is an NADPH binding site. 1-deoxy-D-xylulose 5-phosphate contacts are provided by Ser200, Asn205, Lys206, and Glu209. A Mn(2+)-binding site is contributed by Glu209.

It belongs to the DXR family. It depends on Mg(2+) as a cofactor. The cofactor is Mn(2+).

It catalyses the reaction 2-C-methyl-D-erythritol 4-phosphate + NADP(+) = 1-deoxy-D-xylulose 5-phosphate + NADPH + H(+). It functions in the pathway isoprenoid biosynthesis; isopentenyl diphosphate biosynthesis via DXP pathway; isopentenyl diphosphate from 1-deoxy-D-xylulose 5-phosphate: step 1/6. Functionally, catalyzes the NADPH-dependent rearrangement and reduction of 1-deoxy-D-xylulose-5-phosphate (DXP) to 2-C-methyl-D-erythritol 4-phosphate (MEP). This Thermotoga maritima (strain ATCC 43589 / DSM 3109 / JCM 10099 / NBRC 100826 / MSB8) protein is 1-deoxy-D-xylulose 5-phosphate reductoisomerase.